Consider the following 342-residue polypeptide: Protein-glutamate methylesterase/protein-glutamine glutaminase 3 (342 aa).

A Response regulatory domain is found at 3–120; that stretch reads RVLVVEDMPT…SPGFADDARR (118 aa). Aspartate 54 is modified (4-aspartylphosphate). A CheB-type methylesterase domain is found at 152 to 342; that stretch reads DVPRGRVVAV…ADRLALWLRR (191 aa). Residues serine 164, histidine 191, and aspartate 285 contribute to the active site.

Belongs to the CheB family. Phosphorylated by CheA. Phosphorylation of the N-terminal regulatory domain activates the methylesterase activity.

It is found in the cytoplasm. The catalysed reaction is [protein]-L-glutamate 5-O-methyl ester + H2O = L-glutamyl-[protein] + methanol + H(+). It carries out the reaction L-glutaminyl-[protein] + H2O = L-glutamyl-[protein] + NH4(+). Its function is as follows. Involved in chemotaxis. Part of a chemotaxis signal transduction system that modulates chemotaxis in response to various stimuli. Catalyzes the demethylation of specific methylglutamate residues introduced into the chemoreceptors (methyl-accepting chemotaxis proteins or MCP) by CheR. Also mediates the irreversible deamidation of specific glutamine residues to glutamic acid. The sequence is that of Protein-glutamate methylesterase/protein-glutamine glutaminase 3 from Anaeromyxobacter dehalogenans (strain 2CP-C).